The following is a 588-amino-acid chain: uncharacterized protein (588 aa).

A signal peptide spans 1 to 19 (MRSTAYLTALLSFLGATHA). N-linked (GlcNAc...) asparagine glycans are attached at residues asparagine 45 and asparagine 104. Positions 118–303 (GQGRIPLYSA…TSVTLRTFKD (186 aa)) constitute an FAD-binding PCMH-type domain. Histidine 156 carries the pros-8alpha-FAD histidine modification. Asparagine 179, asparagine 312, asparagine 320, asparagine 351, asparagine 370, and asparagine 446 each carry an N-linked (GlcNAc...) asparagine glycan.

It belongs to the oxygen-dependent FAD-linked oxidoreductase family. The cofactor is FAD.

It localises to the secreted. This is an uncharacterized protein from Arthroderma benhamiae (strain ATCC MYA-4681 / CBS 112371) (Trichophyton mentagrophytes).